A 136-amino-acid polypeptide reads, in one-letter code: uncharacterized protein (136 aa).

Disordered stretches follow at residues 23-44 (QESL…KEDN) and 56-95 (DGVI…ESAR). Residues 61 to 79 (SEEGCSSSGEKENSGLCSE) are compositionally biased toward low complexity. Over residues 80 to 91 (ESSEEDPEEAEE) the composition is skewed to acidic residues.

This is an uncharacterized protein from Saccharomyces cerevisiae (strain ATCC 204508 / S288c) (Baker's yeast).